A 297-amino-acid chain; its full sequence is uncharacterized protein (297 aa).

Helical transmembrane passes span 1 to 21, 32 to 52, 72 to 92, 98 to 118, 120 to 140, 194 to 214, 218 to 238, 253 to 273, and 274 to 294; these read MSWI…LGII, GSIL…IYVY, AMAL…NIPS, VLFF…YGGI, LIHK…ATGI, ILIE…IFAI, VYII…LFFC, LALI…IEIP, and AYIS…ASIL.

The protein belongs to the TerC family.

The protein resides in the cell membrane. This is an uncharacterized protein from Rickettsia prowazekii (strain Madrid E).